The sequence spans 64 residues: Large ribosomal subunit protein bL35 (64 aa).

The tract at residues 1–54 is disordered; the sequence is MPKIKSNSGAAKRFKKTAHGFKHKQSFRSHILTKKSTKRKRQLRGMKQIHDADK. Positions 12-44 are enriched in basic residues; the sequence is KRFKKTAHGFKHKQSFRSHILTKKSTKRKRQLR.

This sequence belongs to the bacterial ribosomal protein bL35 family.

The polypeptide is Large ribosomal subunit protein bL35 (Chromohalobacter salexigens (strain ATCC BAA-138 / DSM 3043 / CIP 106854 / NCIMB 13768 / 1H11)).